The chain runs to 466 residues: Argininosuccinate lyase (466 aa).

The protein belongs to the lyase 1 family. Argininosuccinate lyase subfamily.

The protein localises to the cytoplasm. It catalyses the reaction 2-(N(omega)-L-arginino)succinate = fumarate + L-arginine. It participates in amino-acid biosynthesis; L-arginine biosynthesis; L-arginine from L-ornithine and carbamoyl phosphate: step 3/3. In Brucella anthropi (strain ATCC 49188 / DSM 6882 / CCUG 24695 / JCM 21032 / LMG 3331 / NBRC 15819 / NCTC 12168 / Alc 37) (Ochrobactrum anthropi), this protein is Argininosuccinate lyase.